Consider the following 214-residue polypeptide: Octanoyltransferase (214 aa).

In terms of domain architecture, BPL/LPL catalytic spans 28–210 (GTAEDALYLL…EFGKVFTDTA (183 aa)). Residues 73-80 (RGGNITCH), 140-142 (SIG), and 153-155 (GLS) contribute to the substrate site. Cys171 functions as the Acyl-thioester intermediate in the catalytic mechanism.

Belongs to the LipB family.

It is found in the cytoplasm. It catalyses the reaction octanoyl-[ACP] + L-lysyl-[protein] = N(6)-octanoyl-L-lysyl-[protein] + holo-[ACP] + H(+). It participates in protein modification; protein lipoylation via endogenous pathway; protein N(6)-(lipoyl)lysine from octanoyl-[acyl-carrier-protein]: step 1/2. In terms of biological role, catalyzes the transfer of endogenously produced octanoic acid from octanoyl-acyl-carrier-protein onto the lipoyl domains of lipoate-dependent enzymes. Lipoyl-ACP can also act as a substrate although octanoyl-ACP is likely to be the physiological substrate. This Maridesulfovibrio salexigens (strain ATCC 14822 / DSM 2638 / NCIMB 8403 / VKM B-1763) (Desulfovibrio salexigens) protein is Octanoyltransferase.